A 296-amino-acid polypeptide reads, in one-letter code: Homoserine kinase (296 aa).

Residue 84-94 (PLARGLGSSSS) participates in ATP binding.

This sequence belongs to the GHMP kinase family. Homoserine kinase subfamily.

The protein resides in the cytoplasm. It catalyses the reaction L-homoserine + ATP = O-phospho-L-homoserine + ADP + H(+). It functions in the pathway amino-acid biosynthesis; L-threonine biosynthesis; L-threonine from L-aspartate: step 4/5. Its function is as follows. Catalyzes the ATP-dependent phosphorylation of L-homoserine to L-homoserine phosphate. This chain is Homoserine kinase, found in Lactococcus lactis subsp. cremoris (strain SK11).